The chain runs to 418 residues: Trans-acting enoyl reductase (418 aa).

This sequence belongs to the saccharopine dehydrogenase family. Enoyl reductase subfamily.

Functionally, involved in the reduction of the double bond between C-4 and C-5 during phthiocerol dimycocerosates (DIM A) and glycosylated phenolphthiocerol dimycocerosates (PGL) biosynthesis. This is Trans-acting enoyl reductase from Mycobacterium ulcerans (strain Agy99).